A 399-amino-acid polypeptide reads, in one-letter code: Protein translocase subunit SecD (399 aa).

Transmembrane regions (helical) follow at residues 7 to 27 (IKTAFIVIILGIAIWILLTFP), 239 to 259 (VIGAILVVLFMILVFRFLGLV), 262 to 282 (IALLIYVVLDLAALKLLNATL), 286 to 306 (GVAGIILSIGMAVDANCLIFA), 329 to 351 (ALRAIIDSNVTTILAALILFYFG), and 357 to 381 (GFAVTLSLGVALSMFTQITITRTLL).

Belongs to the SecD/SecF family. SecD subfamily. Forms a complex with SecF. Part of the essential Sec protein translocation apparatus which comprises SecA, SecYEG and auxiliary proteins SecDF. Other proteins may also be involved.

It is found in the cell inner membrane. In terms of biological role, part of the Sec protein translocase complex. Interacts with the SecYEG preprotein conducting channel. SecDF uses the proton motive force (PMF) to complete protein translocation after the ATP-dependent function of SecA. In Dictyoglomus turgidum (strain DSM 6724 / Z-1310), this protein is Protein translocase subunit SecD.